A 610-amino-acid polypeptide reads, in one-letter code: Zinc finger protein 823 (610 aa).

The KRAB domain occupies 4 to 97 (VAFEDVAVNF…VNKNTPRVNP (94 aa)). 10 consecutive C2H2-type zinc fingers follow at residues 164 to 186 (FDCK…MAAH), 192 to 214 (YKCK…ERTH), 220 to 242 (YECK…ERIH), 248 to 270 (YECK…ERTH), 276 to 298 (YKCT…ERTH), 304 to 326 (YACK…MIRH), 332 to 354 (HKCK…ETTH), 360 to 382 (YECK…MITH), 388 to 410 (QKCK…ERTH), and 416 to 438 (YQCK…EATH). The segment at 444–465 (YKCQCGKAFSDLSSFQNHETTH) adopts a C2H2-type 11; atypical zinc-finger fold. 5 consecutive C2H2-type zinc fingers follow at residues 471–493 (YECK…KRTH), 499–521 (YECK…ERIH), 527–549 (YECK…ERIH), 555–577 (YECL…EKTH), and 583–605 (YECK…KRTH).

This sequence belongs to the krueppel C2H2-type zinc-finger protein family.

Its subcellular location is the nucleus. May be involved in transcriptional regulation. The protein is Zinc finger protein 823 (ZNF823) of Homo sapiens (Human).